The sequence spans 136 residues: NADPH-dependent 7-cyano-7-deazaguanine reductase (136 aa).

The Thioimide intermediate role is filled by C50. D57 serves as the catalytic Proton donor. Substrate-binding positions include 72–74 (YEL) and 91–92 (HE).

Belongs to the GTP cyclohydrolase I family. QueF type 1 subfamily.

The protein localises to the cytoplasm. It catalyses the reaction 7-aminomethyl-7-carbaguanine + 2 NADP(+) = 7-cyano-7-deazaguanine + 2 NADPH + 3 H(+). It functions in the pathway tRNA modification; tRNA-queuosine biosynthesis. Its function is as follows. Catalyzes the NADPH-dependent reduction of 7-cyano-7-deazaguanine (preQ0) to 7-aminomethyl-7-deazaguanine (preQ1). The protein is NADPH-dependent 7-cyano-7-deazaguanine reductase of Prochlorococcus marinus (strain MIT 9215).